The chain runs to 997 residues: Serine-repeat antigen protein 5 (997 aa).

An N-terminal signal peptide occupies residues 1–22 (MKSYISLFFILCVIFNKNVIKC). Disordered regions lie at residues 26 to 107 (SQTG…EKQD) and 181 to 252 (LPSN…PRNL). Residues 30 to 51 (NTGGGQAGNTGGDQAGSTGGSP) show a composition bias toward gly residues. The span at 52–67 (QGSTGASPQGSTGASP) shows a compositional bias: low complexity. Polar residues predominate over residues 68–84 (QGSTGASQPGSSEPSNP). Composition is skewed to low complexity over residues 85 to 103 (VSSG…STSS), 183 to 196 (SNGT…STGT), and 205 to 235 (SDSS…SSES). The residue at position 183 (serine 183) is a Phosphoserine. Residue asparagine 184 is glycosylated (N-linked (GlcNAc...) asparagine). The interval 216 to 253 (SSSSSSSSSSSSSSSSSSESLPANGPDSPTVKPPRNLQ) is interaction with PTKL. A glycan (N-linked (GlcNAc...) asparagine) is linked at asparagine 318. The segment at 373–390 (YKYLSEDIVSKFKEIKAE) is interaction with host VTN. A disulfide bridge links cysteine 445 with cysteine 497. Residue threonine 549 is modified to Phosphothreonine; by CPK1. Cystine bridges form between cysteine 567-cysteine 572, cysteine 581-cysteine 610, cysteine 593-cysteine 636, cysteine 627-cysteine 672, and cysteine 755-cysteine 809. Positions 579 to 997 (NNCISNLQVE…TNNECYFCYV (419 aa)) are thiol-protease-like. Catalysis depends on residues histidine 762 and asparagine 787. N-linked (GlcNAc...) asparagine glycosylation occurs at asparagine 828. The propeptide at 843–886 (KASPEFYHNLYFKNFNVGKKNLFSEKEDNENNKKLGNNYIIFGQ) is inhibition peptide. At serine 866 the chain carries Phosphoserine.

The protein belongs to the peptidase C1 family. In terms of assembly, may interact (via C-terminus) with PTKL (via SAM domain). As to quaternary structure, interacts (via C-terminus) with human VTN (via hemopexin repeat 2); may form heterotetramers of two VTN and SERA5 P47 heterodimers; the interaction may protect merozoites from phagocytosis by host monocytes; VTN glycosylation appears to be dispensable for the interaction. Monomer. Interacts with kinase CPK1/CDPK1 at the schizont stage. Post-translationally, phosphorylation by CPK1/CDPK1 increases SERA5 protease activity towards a synthetic peptide in vitro. In terms of processing, just prior to merozoite egress from host erythrocytes, proteolytically cleaved into multiple fragments. Cleaved by SUB1 into p47 and p73, p73 is further cleaved by SUB1 into p56 and p18 and p56 is further processed into p50 by an unidentified protease. p47 remains covalently associated with p18 via disulfide bond. p47 can be processed into p25n and p25c by SUB1. p25c and p25n remain associated with p18. Proteolytic processing is essential for merozoite egress from host erythrocytes. The cleavage of the propeptide to produce p50 is necessary for protease activity and to promote merozoite egress.

The protein localises to the parasitophorous vacuole. It is found in the secreted. It localises to the cell membrane. Functionally, plays an essential role during the asexual blood stage development by controlling the kinetics of merozoite egress from host erythrocytes. Specifically, prevents premature rupture of the parasitophorous vacuole and host erythrocyte membranes. Its function is as follows. May prevent merozoite phagocytosis by host monocytes via interaction with host VTN at the merozoite surface. Plays a role in parasite growth. In terms of biological role, protease activity is controversial. Has been shown in a number of studies to have protease activity towards a synthetic peptide in vitro. Has also been shown to lack protease activity towards a synthetic peptide in vitro. The sequence is that of Serine-repeat antigen protein 5 from Plasmodium falciparum (isolate 3D7).